We begin with the raw amino-acid sequence, 937 residues long: Protein Niban 1 (937 aa).

Glycine 2 carries N-myristoyl glycine lipidation. Phosphoserine is present on residues serine 578, serine 581, serine 595, serine 601, and serine 646. Polar residues predominate over residues 584–595 (DLKTSMGSNQAS). Disordered stretches follow at residues 584–710 (DLKT…GSLR) and 724–891 (SAPE…LGGN). Positions 640 to 651 (ASISGSSPPSGE) are enriched in low complexity. Over residues 655-681 (VSVSGVDNSAGNPLSADNSAGPLSSHL) the composition is skewed to polar residues. The span at 688 to 701 (EPPKDEETAHKRPE) shows a compositional bias: basic and acidic residues. Phosphoserine occurs at positions 708 and 768. Composition is skewed to polar residues over residues 802–817 (PTSQ…NTSC) and 855–869 (VTVT…SSNP).

This sequence belongs to the Niban family. In terms of tissue distribution, detected in brain, lung, spleen and skeletal muscle. Expressed in small renal tumors but not in normal kidney.

It localises to the cytoplasm. It is found in the membrane. Its function is as follows. Regulates phosphorylation of a number of proteins involved in translation regulation including EIF2A, EIF4EBP1 and RPS6KB1. May be involved in the endoplasmic reticulum stress response. The protein is Protein Niban 1 of Rattus norvegicus (Rat).